The sequence spans 296 residues: Glycine--tRNA ligase alpha subunit (296 aa).

The protein belongs to the class-II aminoacyl-tRNA synthetase family. As to quaternary structure, tetramer of two alpha and two beta subunits.

It is found in the cytoplasm. It catalyses the reaction tRNA(Gly) + glycine + ATP = glycyl-tRNA(Gly) + AMP + diphosphate. This is Glycine--tRNA ligase alpha subunit from Listeria monocytogenes serotype 4a (strain HCC23).